Reading from the N-terminus, the 77-residue chain is Defensin-like protein 159 (77 aa).

The first 27 residues, M1–G27, serve as a signal peptide directing secretion. 4 disulfide bridges follow: C30-C77, C40-C59, C45-C71, and C49-C73.

This sequence belongs to the DEFL family.

Its subcellular location is the secreted. This Arabidopsis thaliana (Mouse-ear cress) protein is Defensin-like protein 159 (LCR25).